Here is a 530-residue protein sequence, read N- to C-terminus: Probable glycerol-3-phosphate acyltransferase 2 (530 aa).

3 helical membrane-spanning segments follow: residues 70–90 (YFMVVAFEAGGVIRSLFLLVL), 93–113 (FISLMSYEMGLKTMVMLSFFG), and 275–295 (LVLFMWAPFAAVLAAARLVFG). Residues 339 to 344 (HRTLLD) carry the HXXXXD motif motif.

It belongs to the GPAT/DAPAT family. As to expression, weakly or not expressed in roots, leaves, seedlings, developing siliques and flower buds.

The protein resides in the membrane. It catalyses the reaction sn-glycerol 3-phosphate + an acyl-CoA = a 1-acyl-sn-glycero-3-phosphate + CoA. It participates in phospholipid metabolism; CDP-diacylglycerol biosynthesis; CDP-diacylglycerol from sn-glycerol 3-phosphate: step 1/3. Esterifies acyl-group from acyl-ACP to the sn-1 position of glycerol-3-phosphate, an essential step in glycerolipid biosynthesis. In Arabidopsis thaliana (Mouse-ear cress), this protein is Probable glycerol-3-phosphate acyltransferase 2 (GPAT2).